The chain runs to 360 residues: Chorismate synthase (360 aa).

Arg-48 contributes to the NADP(+) binding site. FMN-binding positions include 125 to 127 (RSS), 242 to 243 (NA), Gly-286, 301 to 305 (KPTSS), and Arg-327.

It belongs to the chorismate synthase family. Homotetramer. FMNH2 serves as cofactor.

The enzyme catalyses 5-O-(1-carboxyvinyl)-3-phosphoshikimate = chorismate + phosphate. It participates in metabolic intermediate biosynthesis; chorismate biosynthesis; chorismate from D-erythrose 4-phosphate and phosphoenolpyruvate: step 7/7. Functionally, catalyzes the anti-1,4-elimination of the C-3 phosphate and the C-6 proR hydrogen from 5-enolpyruvylshikimate-3-phosphate (EPSP) to yield chorismate, which is the branch point compound that serves as the starting substrate for the three terminal pathways of aromatic amino acid biosynthesis. This reaction introduces a second double bond into the aromatic ring system. The protein is Chorismate synthase of Pelagibacter ubique (strain HTCC1062).